Here is a 309-residue protein sequence, read N- to C-terminus: MKIEPIAFESLGVRSQATLVETKDVRILIDPAVSLAPRRYGLPPHRIEVDTLVELAKKITEKAREADVLIVTHYHYDHHDPGYVVPKEIYRDKVVLVKNPESYINPSQGKVRAPKFLRAIKGLPKEISYADGKEYRFGNTRILVSHPVPHGADVRLGYVIQVFIKDGDSSVLFTSDVEGVPSEEHVKFTLDTKPNFLVIDGPLSYLVGRALTEDQLQVSVKNMERLAKSGLETMVVDHHVLRDLKYREVLSGLYDVAKSSGVKVTTAAEILGRETLQLEAKRRELFAQDNSPAKIPRNLASLLRIDQEG.

Belongs to the UPF0282 family.

This Metallosphaera sedula (strain ATCC 51363 / DSM 5348 / JCM 9185 / NBRC 15509 / TH2) protein is UPF0282 protein Msed_0584.